We begin with the raw amino-acid sequence, 451 residues long: Chromosomal replication initiator protein DnaA (451 aa).

Residues 1–77 (MTENEQIFWN…EVYNAQISVD (77 aa)) form a domain I, interacts with DnaA modulators region. Residues 77 to 110 (DYVFEEDLMIEQNQTKINQKPKQQALNSLPTVTS) are domain II. The tract at residues 111–329 (DLNSKYSFEN…GALKDISLGA (219 aa)) is domain III, AAA+ region. ATP is bound by residues G155, G157, K158, and T159. The interval 330 to 451 (NFKQIDTITV…EIETIKNKIK (122 aa)) is domain IV, binds dsDNA.

This sequence belongs to the DnaA family. Oligomerizes as a right-handed, spiral filament on DNA at oriC.

The protein resides in the cytoplasm. In terms of biological role, plays an essential role in the initiation and regulation of chromosomal replication. ATP-DnaA binds to the origin of replication (oriC) to initiate formation of the DNA replication initiation complex once per cell cycle. Binds the DnaA box (a 9 base pair repeat at the origin) and separates the double-stranded (ds)DNA. Forms a right-handed helical filament on oriC DNA; dsDNA binds to the exterior of the filament while single-stranded (ss)DNA is stabiized in the filament's interior. The ATP-DnaA-oriC complex binds and stabilizes one strand of the AT-rich DNA unwinding element (DUE), permitting loading of DNA polymerase. After initiation quickly degrades to an ADP-DnaA complex that is not apt for DNA replication. Binds acidic phospholipids. This is Chromosomal replication initiator protein DnaA from Streptococcus pyogenes serotype M49 (strain NZ131).